The chain runs to 265 residues: Putative 2-amino-3,7-dideoxy-D-threo-hept-6-ulosonate synthase 2 (265 aa).

The Proton acceptor role is filled by Asp-27. Residues 27–31 (DHGVS) and 147–149 (YPR) contribute to the 1-deoxy-D-threo-hexo-2,5-diulose 6-phosphate site. The active-site Proton donor is Tyr-147. Lys-177 serves as the catalytic Schiff-base intermediate with substrate. Residues 202-203 (GG) and 230-231 (GR) contribute to the 1-deoxy-D-threo-hexo-2,5-diulose 6-phosphate site.

Belongs to the DeoC/FbaB aldolase family. ADHS subfamily. In terms of assembly, homodecamer.

The enzyme catalyses 1-deoxy-D-threo-hexo-2,5-diulose 6-phosphate + L-aspartate 4-semialdehyde = 2,3-dioxopropyl phosphate + 2-amino-2,3,7-trideoxy-D-lyxo-hept-6-ulosonate. Catalyzes a transaldol reaction between 6-deoxy-5-ketofructose 1-phosphate (DKFP) and L-aspartate semialdehyde (ASA) with an elimination of hydroxypyruvaldehyde phosphate to yield 2-amino-3,7-dideoxy-D-threo-hept-6-ulosonate (ADH). Plays a key role in an alternative pathway of the biosynthesis of 3-dehydroquinate (DHQ), which is involved in the canonical pathway for the biosynthesis of aromatic amino acids. The polypeptide is Putative 2-amino-3,7-dideoxy-D-threo-hept-6-ulosonate synthase 2 (Archaeoglobus fulgidus (strain ATCC 49558 / DSM 4304 / JCM 9628 / NBRC 100126 / VC-16)).